A 365-amino-acid chain; its full sequence is Spermine synthase (365 aa).

Alanine 2 is modified (N-acetylalanine). Serine 57 is subject to Phosphoserine. One can recognise a PABS domain in the interval 121–361 (RYWPTADGRL…ELWVFYTVWK (241 aa)). Glutamine 147 lines the S-adenosyl 3-(methylsulfanyl)propylamine pocket. Positions 176 and 200 each coordinate spermidine. S-adenosyl 3-(methylsulfanyl)propylamine contacts are provided by residues glutamate 219 and 254-255 (DC). Residue aspartate 275 is the Proton acceptor of the active site. Residues tyrosine 350 and glutamate 352 each contribute to the spermidine site.

It belongs to the spermidine/spermine synthase family. In terms of assembly, homodimer. Dimerization is mediated through the N-terminal domain and seems to be required for activity as deletion of the N-terminal domain causes complete loss of activity.

The enzyme catalyses S-adenosyl 3-(methylsulfanyl)propylamine + spermidine = spermine + S-methyl-5'-thioadenosine + H(+). The protein operates within amine and polyamine biosynthesis; spermine biosynthesis; spermine from spermidine: step 1/1. Its function is as follows. Catalyzes the production of spermine from spermidine and decarboxylated S-adenosylmethionine (dcSAM). The polypeptide is Spermine synthase (SMS) (Bos taurus (Bovine)).